Consider the following 774-residue polypeptide: FT-interacting protein 7 (774 aa).

A compositionally biased stretch (basic and acidic residues) spans Met-1–Ser-17. The interval Met-1–Ala-25 is disordered. C2 domains lie at Gly-23–Tyr-143, Ile-182–Tyr-305, and Tyr-346–Tyr-472. Positions 56, 62, 109, 111, and 116 each coordinate Ca(2+). 3 consecutive transmembrane segments (helical) span residues Ile-575–Trp-595, Ile-606–Leu-626, and Ala-714–Phe-734.

It belongs to the MCTP family. Interacts with OSH1. Requires Ca(2+) as cofactor. As to expression, expressed in roots, stems, lemma, palea, pistils and ovules. Expressed at low levels in leaves.

It localises to the cell membrane. Its function is as follows. Promotes nuclear translocation of the transcription factor OSH1, which directly suppresses the auxin biosynthetic gene YUCCA4 during the late development of anthers. Reduction of auxin levels at late stage of anther development, after meiosis of microspore mother cells, is necessary for normal anther dehiscence and seed setting. Required for jasmonate (JA) biosynthetic genes expression and JA production in anthers. In Oryza sativa subsp. japonica (Rice), this protein is FT-interacting protein 7.